The following is a 570-amino-acid chain: Sulfite reductase [NADPH] hemoprotein beta-component (570 aa).

4 residues coordinate [4Fe-4S] cluster: Cys434, Cys440, Cys479, and Cys483. Cys483 serves as a coordination point for siroheme.

This sequence belongs to the nitrite and sulfite reductase 4Fe-4S domain family. In terms of assembly, alpha(8)-beta(8). The alpha component is a flavoprotein, the beta component is a hemoprotein. The cofactor is siroheme. [4Fe-4S] cluster is required as a cofactor.

It catalyses the reaction hydrogen sulfide + 3 NADP(+) + 3 H2O = sulfite + 3 NADPH + 4 H(+). The protein operates within sulfur metabolism; hydrogen sulfide biosynthesis; hydrogen sulfide from sulfite (NADPH route): step 1/1. Component of the sulfite reductase complex that catalyzes the 6-electron reduction of sulfite to sulfide. This is one of several activities required for the biosynthesis of L-cysteine from sulfate. The polypeptide is Sulfite reductase [NADPH] hemoprotein beta-component (Escherichia coli O17:K52:H18 (strain UMN026 / ExPEC)).